Here is a 405-residue protein sequence, read N- to C-terminus: Pre-mRNA-splicing factor cwc-24 (405 aa).

2 disordered regions span residues Met-1 to Tyr-114 and Thr-162 to Tyr-184. Positions Glu-15–Ala-29 are enriched in low complexity. The span at Phe-31 to Pro-46 shows a compositional bias: basic residues. The segment covering Ser-56 to Ala-70 has biased composition (acidic residues). Residues Arg-74–His-83 show a composition bias toward basic residues. The C3H1-type zinc-finger motif lies at Asp-221–Glu-249. Residues Cys-310–Gly-349 form an RING-type zinc finger. Basic and acidic residues predominate over residues Lys-370–Glu-386. The segment at Lys-370–Asp-405 is disordered. Positions Val-387–Asp-405 are enriched in acidic residues.

Belongs to the CWC24 family. As to quaternary structure, associated with the spliceosome.

The protein localises to the nucleus. Involved in pre-mRNA splicing. The chain is Pre-mRNA-splicing factor cwc-24 (cwc-24) from Neurospora crassa (strain ATCC 24698 / 74-OR23-1A / CBS 708.71 / DSM 1257 / FGSC 987).